The sequence spans 1625 residues: MKIPGVATVLGGVTNGVAQTVRAGARLPGSAAAAVQTLASPVLELTGPVVQSVVQTTGRAIGVRGSHNESPDGMTPPVRWRSGRRVHFDLDPLLPFPRWHEHAAMVEEPVRRIPGVAEAHVEGSLGRLVVELEPDADSDIAVDEVRDVVSAVAADIFLAGSVSSPNSAPFADPGNPLAILVPLTAAAMDLVAMGATVTGWVARLPAAPQTTRALAALINHQPRMVSLMESRLGRVGTDIALAATTAAANGLTQSLGTPLLDLVQRSLQISEAAAHRRVWRDREPALASPRRPQAPVVPIISSAGAKSQEPRHSWAAAAAGEASHVVVGGSIDAAIDTAKGSRAGPVEQYVNQAANGSLIAAASALVAGGGTEDAAGAILAGVPRAAHMGRQAFAAVLGRGLANTGQLVLDPGALRRLDRVRVVVIDGAALRGDNRAVLHAQGDEPGWDDDRVYEVADALLHGEQAPEPDPDELPATGARLRWAPAQGPSATPAQGLEHADLVVDGQCVGSVDVGWEVDPYAIPLLQTAHRTGARVVLRHVAGTEDLSASVGSTHPPGTPLLKLVRELRADRGPVLLITAVHRDFASTDTLAALAIADVGVALDDPRGATPWTADLITGTDLAAAVRILSALPVARAASESAVHLAQGGTTLAGLLLVTGEQDKTTNPASFRRWLNPVNAAAATALVSGMWSAAKVLRMPDPTPQPLTAWHALDPEIVYSRLAGGSRPLAVEPGIPAWRRILDDLSYEPVMAPLRGPARTLAQLAVATRHELADPLTPILAVGAAASAIVGSNIDALLVAGVMTVNAITGGVQRLRAEAAAAELFAEQDQLVRRVVVPAVATTRRRLEAARHATRTATVSAKSLRVGDVIDLAAPEVVPADARLLVAEDLEVDESFLTGESLPVDKQVDPVAVNDPDRASMLFEGSTIVAGHARAIVVATGVGTAAHRAISAVADVETAAGVQARLRELTSKVLPMTLAGGAAVTALALLRRASLRQAVADGVAIAVAAVPEGLPLVATLSQLAAAQRLTARGALVRSPRTIEALGRVDTICFDKTGTLTENRLRVVCALPSSTAAERDPLPQTTDAPSAEVLRAAARASTQPHNGEGHAHATDEAILAAASALAGSLSSQGDSEWVVLAEVPFESSRGYAAAIGRVGTDGIPMLMLKGAPETILPRCRLADPGVDHEHAESVVRHLAEQGLRVLAVAQRTWDNGTTHDDETDADAVDAVAHDLELIGYVGLADTARSSSRPLIEALLDAERNVVLITGDHPITARAIARQLGLPADARVVTGAELAVLDEEAHAKLAADMQVFARVSPEQKVQIVAALQRCGRVTAMVGDGANDAAAIRMADVGIGVSGRGSSAARGAADIVLTDDDLGVLLDALVEGRSMWAGVRDAVTILVGGNVGEVLFTVIGTAFGAGRAPVGTRQLLLVNLLTDMFPALAVAVTSQFAEPDDAEYPTDDAAERAQREHRRAVLIGPTPSLDAPLLRQIVNRGVVTAAGATAAWAIGRWTPGTERRTATMGLTALVMTQLAQTLLTRRHSPLVIATALGSAGVLVGIIQTPVISHFFGCTPLGPVAWTGVFSATAGATAVSALAPKWLASTVGVVQPDERPDDAEDSDAGG.

Helical transmembrane passes span 148 to 168, 177 to 197, 358 to 378, 637 to 657, 673 to 693, 778 to 798, 968 to 988, and 997 to 1017; these read VVSA…PNSA, LAIL…GATV, LIAA…AGAI, ASES…LLLV, WLNP…WSAA, ILAV…ALLV, LTSK…ALAL, and AVAD…PLVA. Residue Asp-1053 is the 4-aspartylphosphate intermediate of the active site. 2 residues coordinate Mg(2+): Asp-1340 and Asp-1344. 3 consecutive transmembrane segments (helical) span residues 1401 to 1421, 1432 to 1452, and 1547 to 1567; these read ILVG…AFGA, LLVN…TSQF, and VIAT…TPVI.

Belongs to the cation transport ATPase (P-type) (TC 3.A.3) family.

The protein resides in the cell membrane. The enzyme catalyses ATP + H2O = ADP + phosphate + H(+). The polypeptide is Probable cation-transporting ATPase I (ctpI) (Mycobacterium tuberculosis (strain CDC 1551 / Oshkosh)).